The chain runs to 371 residues: Histidinol-phosphate aminotransferase (371 aa).

K228 carries the N6-(pyridoxal phosphate)lysine modification.

This sequence belongs to the class-II pyridoxal-phosphate-dependent aminotransferase family. Histidinol-phosphate aminotransferase subfamily. Pyridoxal 5'-phosphate is required as a cofactor.

It catalyses the reaction L-histidinol phosphate + 2-oxoglutarate = 3-(imidazol-4-yl)-2-oxopropyl phosphate + L-glutamate. The protein operates within amino-acid biosynthesis; L-histidine biosynthesis; L-histidine from 5-phospho-alpha-D-ribose 1-diphosphate: step 7/9. The sequence is that of Histidinol-phosphate aminotransferase from Methanococcus maripaludis (strain C7 / ATCC BAA-1331).